We begin with the raw amino-acid sequence, 97 residues long: Large ribosomal subunit protein eL21 (97 aa).

This sequence belongs to the eukaryotic ribosomal protein eL21 family.

This is Large ribosomal subunit protein eL21 from Methanosarcina barkeri (strain Fusaro / DSM 804).